A 117-amino-acid polypeptide reads, in one-letter code: Conotoxin vil14.3 (117 aa).

The N-terminal stretch at 1–22 is a signal peptide; that stretch reads MGFRVLVLVVMATTSALPFTFS. Positions 23–90 are excised as a propeptide; it reads EEPGRSPFRP…FAELSVGQRR (68 aa). The segment at 53 to 79 is disordered; that stretch reads RADGQPPDMRQPEMRRPEMRRPEVRQP. The span at 62 to 79 shows a compositional bias: basic and acidic residues; that stretch reads RQPEMRRPEMRRPEVRQP. Disulfide bonds link C96/C116 and C100/C112.

Belongs to the conotoxin R superfamily. As to expression, expressed by the venom duct.

It localises to the secreted. In Conus villepinii (Villepin's cone), this protein is Conotoxin vil14.3.